Here is a 1463-residue protein sequence, read N- to C-terminus: Collagen alpha-1(I) chain (1463 aa).

Residues 1–22 (MFSFVDLRLLLLLAATALLTHG) form the signal peptide. Residues 23 to 161 (QEEGQEEGQE…PPGLGGNFAP (139 aa)) constitute a propeptide, N-terminal propeptide. Residues 38-96 (VTCVQNGLRYHDRDVWKPVPCQICVCDNGNVLCDDVICDELKDCPNAKVPTDECCPVCP) form the VWFC domain. The disordered stretch occupies residues 98-1217 (GQESPTDQET…AHDGGRYYRA (1120 aa)). Residues 138-153 (PGLPGPPGPPGPPGPP) show a composition bias toward pro residues. Residue Gln-162 is modified to Pyrrolidone carboxylic acid. Residues 162 to 177 (QLSYGYDEKSTGISVP) are nonhelical region (N-terminal). Residue Lys-170 is modified to Allysine. Residue Ser-171 is modified to Phosphoserine. The interval 178–1191 (GPMGPSGPRG…PGPPGPPGPP (1014 aa)) is triple-helical region. 4-hydroxyproline occurs at positions 189, 192, 195, 204, 207, 210, 225, 240, 246, 255, and 261. Residues 197-216 (PQGFQGPPGEPGEPGASGPM) show a composition bias toward low complexity. Positions 228-242 (NGDDGEAGKPGRPGE) are enriched in basic and acidic residues. A 5-hydroxylysine; alternate modification is found at Lys-264. An O-linked (Gal...) hydroxylysine; alternate glycan is attached at Lys-264. A Phosphoserine modification is found at Ser-270. 2 positions are modified to 5-hydroxylysine: Lys-276 and Lys-285. The segment covering 278–294 (DAGPAGPKGEPGSPGEN) has biased composition (low complexity). Pro-288, Pro-291, Pro-297, Pro-306, and Pro-312 each carry 4-hydroxyproline. The segment covering 317 to 330 (PAGARGNDGATGAA) has biased composition (low complexity). The segment covering 332–344 (PPGPTGPAGPPGF) has biased composition (pro residues). A 4-hydroxyproline mark is found at Pro-333, Pro-342, and Pro-345. A compositionally biased stretch (gly residues) spans 349–358 (GAKGEGGPQG). Pro-372, Pro-375, Pro-387, Pro-393, Pro-402, Pro-408, Pro-411, and Pro-426 each carry 4-hydroxyproline. Residues 378 to 417 (AGAAGPAGNPGADGQPGAKGANGAPGIAGAPGFPGARGPS) are compositionally biased toward low complexity. Lys-429 is subject to 5-hydroxylysine. 4-hydroxyproline is present on residues Pro-435, Pro-438, Pro-450, Pro-459, Pro-474, Pro-480, Pro-489, and Pro-495. Positions 484–493 (GERGGPGSRG) are enriched in gly residues. The segment covering 494–525 (FPGADGVAGPKGPAGERGAPGPAGPKGSPGEA) has biased composition (low complexity). 5-hydroxylysine is present on Lys-504. A 4-hydroxyproline mark is found at Pro-513, Pro-522, Pro-528, Pro-534, Pro-543, Pro-546, Pro-555, Pro-564, Pro-570, Pro-582, Pro-591, Pro-600, Pro-603, Pro-621, Pro-639, Pro-645, Pro-651, Pro-657, Pro-663, Pro-669, Pro-681, Pro-690, Pro-702, Pro-714, Pro-717, Pro-723, Pro-729, and Pro-738. Residues 537–563 (KGLTGSPGSPGPDGKTGPPGPAGQDGR) show a composition bias toward low complexity. The segment covering 572–591 (ARGQAGVMGFPGPKGAAGEP) has biased composition (low complexity). A compositionally biased stretch (low complexity) spans 633–660 (QGPAGSPGFQGLPGPAGPPGEAGKPGEQ). Over residues 695-723 (PRGANGAPGNDGAKGDAGAPGAPGSQGAP) the composition is skewed to low complexity. The Cell attachment site signature appears at 744 to 746 (RGD). Lys-750 carries the post-translational modification 5-hydroxylysine. Residues Pro-756, Pro-771, and Pro-777 each carry the 4-hydroxyproline modification. Residues 783 to 797 (AGPSGPAGPTGARGA) are compositionally biased toward low complexity. Ser-786 carries the phosphoserine modification. A 4-hydroxyproline mark is found at Pro-798, Pro-804, Pro-807, Pro-816, Pro-822, Pro-840, Pro-849, and Pro-858. Over residues 810 to 837 (AGFAGPPGADGQPGAKGEPGDAGAKGDA) the composition is skewed to low complexity. Over residues 839 to 851 (PPGPAGPAGPPGP) the composition is skewed to pro residues. Low complexity predominate over residues 852–882 (IGNVGAPGPKGARGSAGPPGATGFPGAAGRV). Lys-861 carries the 5-hydroxylysine modification. Pro-870 and Pro-876 each carry 4-hydroxyproline. 3-hydroxyproline is present on Pro-884. 4-hydroxyproline occurs at positions 885, 894, 897, 918, 927, 936, 945, 963, 972, 975, 981, 996, 1002, 1008, 1017, and 1023. Low complexity predominate over residues 930–954 (AGEKGAPGADGPAGAPGTPGPQGIA). Pro residues predominate over residues 995-1005 (PPGPMGPPGLA). A 5-hydroxylysine modification is found at Lys-1032. Over residues 1041-1056 (AGPPGAPGAPGAPGPV) the composition is skewed to pro residues. 4-hydroxyproline occurs at positions 1044, 1047, and 1050. Residues 1077–1091 (IGPVGARGPAGPQGP) show a composition bias toward low complexity. The short motif at 1092 to 1094 (RGD) is the Cell attachment site element. Residues 1092 to 1106 (RGDKGETGEQGDRGI) are compositionally biased toward basic and acidic residues. 5-hydroxylysine is present on Lys-1095. Lys-1107 is modified (5-hydroxylysine; alternate). A glycan (O-linked (Gal...) hydroxylysine; alternate) is linked at Lys-1107. 4-hydroxyproline occurs at positions 1119, 1122, 1125, 1143, and 1158. Low complexity predominate over residues 1125–1149 (PGEQGPSGASGPAGPRGPPGSAGSP). 3-hydroxyproline is present on Pro-1163. Pro-1164 is subject to 4-hydroxyproline. A compositionally biased stretch (pro residues) spans 1176–1191 (AGPPGPPGPPGPPGPP). The residue at position 1178 (Pro-1178) is a 3-hydroxyproline. Pro-1179 bears the 4-hydroxyproline mark. The residue at position 1181 (Pro-1181) is a 3-hydroxyproline. Pro-1182 bears the 4-hydroxyproline mark. Pro-1184 carries the 3-hydroxyproline modification. 4-hydroxyproline is present on residues Pro-1185, Pro-1188, and Pro-1191. The segment at 1192–1215 (SGGYDLSFLPQPPQEKAHDGGRYY) is nonhelical region (C-terminal). Positions 1206–1217 (EKAHDGGRYYRA) are enriched in basic and acidic residues. Lys-1207 carries the post-translational modification Allysine. Positions 1218–1463 (DDANVVRDRD…GFDVGPACFL (246 aa)) are cleaved as a propeptide — C-terminal propeptide. The Fibrillar collagen NC1 domain occupies 1228 to 1463 (LEVDTTLKSL…GFDVGPACFL (236 aa)). 3 cysteine pairs are disulfide-bonded: Cys-1258/Cys-1290, Cys-1298/Cys-1461, and Cys-1369/Cys-1414. Residues Asp-1276, Asn-1278, Gln-1279, Cys-1281, and Asp-1284 each contribute to the Ca(2+) site.

This sequence belongs to the fibrillar collagen family. Trimers of one alpha 2(I) and two alpha 1(I) chains. Interacts with MRC2. Interacts with TRAM2. Interacts with MFAP4 in a Ca (2+)-dependent manner. Post-translationally, contains mostly 4-hydroxyproline. Proline residues at the third position of the tripeptide repeating unit (G-X-Y) are hydroxylated in some or all of the chains. In terms of processing, contains 3-hydroxyproline at a few sites. This modification occurs on the first proline residue in the sequence motif Gly-Pro-Hyp, where Hyp is 4-hydroxyproline. Lysine residues at the third position of the tripeptide repeating unit (G-X-Y) are 5-hydroxylated in some or all of the chains. Post-translationally, O-glycosylated on hydroxylated lysine residues. The O-linked glycan consists of a Glc-Gal disaccharide. As to expression, forms the fibrils of tendon, ligaments and bones. In bones the fibrils are mineralized with calcium hydroxyapatite.

It localises to the secreted. Its subcellular location is the extracellular space. It is found in the extracellular matrix. In terms of biological role, type I collagen is a member of group I collagen (fibrillar forming collagen). This Bos taurus (Bovine) protein is Collagen alpha-1(I) chain (COL1A1).